The chain runs to 226 residues: Leucyl/phenylalanyl-tRNA--protein transferase (226 aa).

The protein belongs to the L/F-transferase family.

Its subcellular location is the cytoplasm. It catalyses the reaction N-terminal L-lysyl-[protein] + L-leucyl-tRNA(Leu) = N-terminal L-leucyl-L-lysyl-[protein] + tRNA(Leu) + H(+). The catalysed reaction is N-terminal L-arginyl-[protein] + L-leucyl-tRNA(Leu) = N-terminal L-leucyl-L-arginyl-[protein] + tRNA(Leu) + H(+). It carries out the reaction L-phenylalanyl-tRNA(Phe) + an N-terminal L-alpha-aminoacyl-[protein] = an N-terminal L-phenylalanyl-L-alpha-aminoacyl-[protein] + tRNA(Phe). Functions in the N-end rule pathway of protein degradation where it conjugates Leu, Phe and, less efficiently, Met from aminoacyl-tRNAs to the N-termini of proteins containing an N-terminal arginine or lysine. In Pseudomonas fluorescens (strain SBW25), this protein is Leucyl/phenylalanyl-tRNA--protein transferase.